Reading from the N-terminus, the 283-residue chain is Movement protein (283 aa).

Belongs to the tenuiviruses pc4 protein family.

Its function is as follows. Transports viral genome to neighboring plant cells directly through plasmosdesmata, without any budding. The movement protein allows efficient cell to cell propagation, by bypassing the host cell wall barrier. This Maize stripe virus (MStV) protein is Movement protein.